The primary structure comprises 219 residues: Probable glutathione S-transferase GSTF1 (219 aa).

A GST N-terminal domain is found at 2–83 (TPVKVFGPAQ…YILRKYKTRE (82 aa)). Residues serine 12, 41 to 42 (HK), 54 to 55 (QI), and 67 to 68 (ES) each bind glutathione. The 129-residue stretch at 91–219 (NLREAAMVDV…LAAVMAPQGA (129 aa)) folds into the GST C-terminal domain.

This sequence belongs to the GST superfamily. Phi family. In terms of tissue distribution, constitutively expressed in roots.

The catalysed reaction is RX + glutathione = an S-substituted glutathione + a halide anion + H(+). Conjugation of reduced glutathione to a wide number of exogenous and endogenous hydrophobic electrophiles. The chain is Probable glutathione S-transferase GSTF1 (GSTF1) from Oryza sativa subsp. japonica (Rice).